A 493-amino-acid chain; its full sequence is Alpha-amylase-related protein (493 aa).

Residues 1–19 form the signal peptide; sequence MFKLAFTLTLCLAGSLSLA. Position 20 is a pyrrolidone carboxylic acid (Q20). Residues C47 and C103 are joined by a disulfide bond. Positions 117, 168, and 177 each coordinate Ca(2+). Residues C156 and C170 are joined by a disulfide bond. R205 serves as a coordination point for chloride. D207 serves as the catalytic Nucleophile. Residue H211 participates in Ca(2+) binding. Residue E244 is the Proton donor of the active site. Residues N307 and R342 each coordinate chloride. 3 disulfide bridges follow: C375–C381, C417–C440, and C447–C459.

It belongs to the glycosyl hydrolase 13 family. Monomer. Ca(2+) is required as a cofactor. Chloride serves as cofactor.

It localises to the secreted. It catalyses the reaction Endohydrolysis of (1-&gt;4)-alpha-D-glucosidic linkages in polysaccharides containing three or more (1-&gt;4)-alpha-linked D-glucose units.. In Drosophila orena (Fruit fly), this protein is Alpha-amylase-related protein (Amyrel).